A 53-amino-acid chain; its full sequence is UPF0391 membrane protein PC1_0455 (53 aa).

2 consecutive transmembrane segments (helical) span residues 4 to 24 (WGIIFLVIALIAAALGFGGLA) and 30 to 47 (AAKIVFVVGIILFLLSLF).

Belongs to the UPF0391 family.

Its subcellular location is the cell membrane. This is UPF0391 membrane protein PC1_0455 from Pectobacterium carotovorum subsp. carotovorum (strain PC1).